A 409-amino-acid chain; its full sequence is NADH-quinone oxidoreductase subunit D (409 aa).

It belongs to the complex I 49 kDa subunit family. As to quaternary structure, NDH-1 is composed of 14 different subunits. Subunits NuoB, C, D, E, F, and G constitute the peripheral sector of the complex.

The protein resides in the cell inner membrane. The catalysed reaction is a quinone + NADH + 5 H(+)(in) = a quinol + NAD(+) + 4 H(+)(out). Its function is as follows. NDH-1 shuttles electrons from NADH, via FMN and iron-sulfur (Fe-S) centers, to quinones in the respiratory chain. The immediate electron acceptor for the enzyme in this species is believed to be ubiquinone. Couples the redox reaction to proton translocation (for every two electrons transferred, four hydrogen ions are translocated across the cytoplasmic membrane), and thus conserves the redox energy in a proton gradient. The polypeptide is NADH-quinone oxidoreductase subunit D (Campylobacter concisus (strain 13826)).